We begin with the raw amino-acid sequence, 206 residues long: Alpha-S1-casein (206 aa).

The N-terminal stretch at 1 to 15 (MKLLIFICLAAVALA) is a signal peptide. 8 positions are modified to phosphoserine: Ser33, Ser77, Ser78, Ser79, Ser80, Ser81, Ser82, and Ser89. Residues 67-106 (HGMEGHEQRGSSSSSSEEVVGNSAEQKHVQKEEDVPSQSY) are disordered. The span at 91–100 (EQKHVQKEED) shows a compositional bias: basic and acidic residues.

This sequence belongs to the alpha-casein family. In terms of tissue distribution, mammary gland specific. Secreted in milk.

The protein localises to the secreted. Its function is as follows. Important role in the capacity of milk to transport calcium phosphate. This chain is Alpha-S1-casein (CSN1S1), found in Sus scrofa (Pig).